A 289-amino-acid polypeptide reads, in one-letter code: Ribosomal protein L11 methyltransferase (289 aa).

Positions 142, 163, 185, and 226 each coordinate S-adenosyl-L-methionine.

This sequence belongs to the methyltransferase superfamily. PrmA family.

The protein resides in the cytoplasm. It carries out the reaction L-lysyl-[protein] + 3 S-adenosyl-L-methionine = N(6),N(6),N(6)-trimethyl-L-lysyl-[protein] + 3 S-adenosyl-L-homocysteine + 3 H(+). In terms of biological role, methylates ribosomal protein L11. The polypeptide is Ribosomal protein L11 methyltransferase (Legionella pneumophila subsp. pneumophila (strain Philadelphia 1 / ATCC 33152 / DSM 7513)).